We begin with the raw amino-acid sequence, 340 residues long: MTNKNAYAQSGVDVEAGYEVVERIKKHVARTERAGVMGALGGFGGMFDLSKTGVKEPVLISGTDGVGTKLMLAIKYDKHDTIGQDCVAMCVNDIIAAGAEPLYFLDYVATGKNEPAKLEQVVAGVAEGCVQAGAALIGGETAEMPGMYGEDDYDLAGFAVGVAEKSQIIDGSKVVEGDVLLGLASSGLHSNGYSLVRRVFADYTGEEVLPELEGKKLKEVLLEPTRIYVKAVLPLIKEELVNGIAHITGGGFIENVPRMFADDLAAEIDESKVPVLPIFKALEKYGQIKHEEMFEIFNMGVGLMLAVSPENVERVKELLDEAVYEIGRIVKKENESVIIK.

The protein belongs to the AIR synthase family.

The protein localises to the cytoplasm. The enzyme catalyses 2-formamido-N(1)-(5-O-phospho-beta-D-ribosyl)acetamidine + ATP = 5-amino-1-(5-phospho-beta-D-ribosyl)imidazole + ADP + phosphate + H(+). The protein operates within purine metabolism; IMP biosynthesis via de novo pathway; 5-amino-1-(5-phospho-D-ribosyl)imidazole from N(2)-formyl-N(1)-(5-phospho-D-ribosyl)glycinamide: step 2/2. The polypeptide is Phosphoribosylformylglycinamidine cyclo-ligase (Streptococcus pneumoniae (strain Taiwan19F-14)).